The sequence spans 190 residues: Somatotropin (190 aa).

Histidine 19 provides a ligand contact to Zn(2+). The cysteines at positions 52 and 163 are disulfide-linked. The residue at position 105 (serine 105) is a Phosphoserine. Glutamate 172 is a binding site for Zn(2+). A disulfide bond links cysteine 180 and cysteine 188.

The protein belongs to the somatotropin/prolactin family.

Its subcellular location is the secreted. In terms of biological role, plays an important role in growth control. Its major role in stimulating body growth is to stimulate the liver and other tissues to secrete IGF1. It stimulates both the differentiation and proliferation of myoblasts. It also stimulates amino acid uptake and protein synthesis in muscle and other tissues. This chain is Somatotropin (GH1), found in Vulpes vulpes (Red fox).